Consider the following 865-residue polypeptide: Nitrogen regulatory protein nrfA (865 aa).

5 disordered regions span residues 1–75 (MEGI…DEMQ), 115–140 (RKEREQQEREQQARASETVSPAPSGI), 177–227 (FDSP…QDQR), 557–605 (GSTD…RTAS), and 617–663 (LNGS…AGPT). Positions 32–46 (DDFTFDSPFSSSGSS) are enriched in low complexity. Basic and acidic residues-rich tracts occupy residues 115-126 (RKEREQQEREQQ) and 180-189 (PAEHPSHPSA). The segment covering 582 to 592 (ASVSDVRNQNQ) has biased composition (polar residues). The GATA-type zinc finger occupies 665-689 (CTNCFTQTTPLWRRNPEGQPLCNAC). The interval 713-854 (NRSSANTLAV…NHSIAGGQGA (142 aa)) is disordered. Polar residues-rich tracts occupy residues 715 to 724 (SSANTLAVGT) and 737 to 764 (IQHAPSTSISSRINTSESPPSMTGSNTL). 2 stretches are compositionally biased toward low complexity: residues 771-786 (PIAAAPPKSGPPAGVA) and 830-844 (PLAPAMAPPAAANPA).

It localises to the nucleus. Its function is as follows. Major nitrogen regulatory protein. This Penicillium urticae protein is Nitrogen regulatory protein nrfA (nrfA).